The following is a 1230-amino-acid chain: MASASYHISNLLEKMTSSGKDFRFMATNDLMTELQKDSIKLDDDSERKVVKMILKLQEDKNGEVQNLAVKCLGPLVSKVKEYQVETIVDTLCTNMLSDKEQLRDISSIGLKTVIGELPPASSGSALAANVCKKITGRLTSAIAKQEDVSVQLEALDIMADMLSRQGGLLVNFHPSILTCLLPQLTSPRLAVRKRTIIALGHLVMSCGNIVFVGLIEHLLSELSKNDSMSTTRTYIQCIAAISRQAGHRIGEYLEKIIPLVVKFCNVDDDELREYCIQAFESFVRRCPKEVYPHVSTIINICLKYLTYDPNYNYDDEDEDENAMDADGGDDDDQGSDDEYSDDGDMSWKVRRAAAKCLDAVVSTRHEMLPEFYKTVSPALISRFKEREENVKADVFHAYLSLLKQTRPVQSWLCDPDAMEQGETPLTMLQSQVPNIVKALHKQMKEKSVKTRQCCFNMLTELVNVLPGALTQHIPVLVPGIIFSLNDESSSSNLKIDALSCLYVILCNHSPQVFHPHVQALVPPVVACVGDPFYKITSEALLVTQQLVKVIRPLDQPSSFDATPYIKDVFTCTIKRLKAADIDQDVKERAISCMGQIICNLGDNLGSDLPNTLQIFLERLKNEITRLTTVKALTLIAGSPLKIDLRPVLGEGVPILASFLRKNQRALKLGTLSALDILIKNYSDSLTAAMIDAVLDELPPLISESDMHVSQMAISFLTTLAKVYPSSLSKISGSILNELIGLVRSPLLQGGALSAMLDFFQALVVTGTNNLGYMDLLRMLTGPVYSQSTALTHKQSYYSIAKCVAALTRACPKEGPAVVGQFIQDVKNSRSTDSIRLLALLSLGEVGHHIDLSGQLELKSVILEAFSSPSEEVKSAASYALGSISVGNLPEYLPFVLQEITSQPKRQYLLLHSLKEIISSASVVGLKPYVENIWALLLKHCECAEEGTRNVVAECLGKLTLIDPETLLPRLKGYLISGSSYARSSVVTAVKFTISDHPQPIDPLLKNCIGDFLKTLEDPDLNVRRVALVTFNSAAHNKPSLIRDLLDTVLPHLYNETKVRKELIREVEMGPFKHTVDDGLDIRKAAFECMYTLLDSCLDRLDIFEFLNHVEDGLKDHYDIKMLTFLMLVRLSTLCPSAVLQRLDRLVEPLRATCTTKVKANSVKQEFEKQDELKRSAMRAVAALLTIPEAEKSPLMSEFQSQISSNPELAAIFESIQKDSSSTNLESMDTS.

At Ala2 the chain carries N-acetylalanine. HEAT repeat units lie at residues 2-39 (ASAS…KDSI), 44-81 (DSER…KVKE), 83-119 (QVET…ELPP), 131-165 (CKKI…LSRQ), 171-208 (NFHP…SCGN), 210-247 (VFVG…QAGH), 248-282 (RIGE…FESF), 289-366 (EVYP…TRHE), 370-407 (EFYK…QTRP), 424-467 (PLTM…VLPG), 471-510 (QHIP…NHSP), and 515-552 (PHVQ…VIRP). An N6-acetyllysine modification is found at Lys55. Residues 315 to 343 (DEDEDENAMDADGGDDDDQGSDDEYSDDG) form a disordered region. Residue Ser335 is modified to Phosphoserine. Ser558 carries the phosphoserine modification. HEAT repeat units lie at residues 563–602 (PYIK…NLGD), 606–643 (SDLP…LKID), 646–683 (PVLG…NYSD), 688–725 (AMID…VYPS), 729–768 (KISG…TGTN), 770–808 (LGYM…ALTR), 809–845 (ACPK…LGEV), 852–889 (SGQL…GNLP), 890–927 (EYLP…GLKP), 928–960 (YVEN…KLTL), 961–998 (IDPE…DHPQ), 1002–1039 (PLLK…NKPS), 1043–1097 (DLLD…DSCL), 1099–1133 (RLDI…LSTL), and 1140–1189 (QRLD…IPEA). Lys971 carries the post-translational modification N6-acetyllysine.

Belongs to the CAND family. In terms of assembly, interacts with TBP. Part of a complex that contains CUL1 and RBX1. Interacts with unneddylated cullins: interacts with CUL1, CUL2, CUL3, CUL4A, CUL4B and CUL5. Does not bind neddylated CUL1. Interaction with cullins is abolished in presence of COMMD1, which antagonizes with CAND1 for interacting with cullins. Interacts with ERCC6. Interacts with DCUN1D1, DCUN1D2, DCUN1D3, DCUN1D4 and DCUN1D5; these interactions are bridged by cullins and strongly inhibits the neddylation of cullins.

The protein localises to the cytoplasm. It is found in the nucleus. Functionally, key assembly factor of SCF (SKP1-CUL1-F-box protein) E3 ubiquitin ligase complexes that promotes the exchange of the substrate-recognition F-box subunit in SCF complexes, thereby playing a key role in the cellular repertoire of SCF complexes. Acts as a F-box protein exchange factor. The exchange activity of CAND1 is coupled with cycles of neddylation conjugation: in the deneddylated state, cullin-binding CAND1 binds CUL1-RBX1, increasing dissociation of the SCF complex and promoting exchange of the F-box protein. Probably plays a similar role in other cullin-RING E3 ubiquitin ligase complexes. This is Cullin-associated NEDD8-dissociated protein 1 (CAND1) from Pongo abelii (Sumatran orangutan).